A 242-amino-acid chain; its full sequence is Uridylate kinase (242 aa).

Position 15 to 18 (15 to 18 (KLSG)) interacts with ATP. An involved in allosteric activation by GTP region spans residues 23–28 (GAEGFG). Residue Gly57 participates in UMP binding. Residues Gly58 and Arg62 each coordinate ATP. UMP contacts are provided by residues Asp77 and 138 to 145 (TGNPFFTT). Residues Thr165, Tyr171, and Asp174 each coordinate ATP.

It belongs to the UMP kinase family. Homohexamer.

The protein localises to the cytoplasm. It catalyses the reaction UMP + ATP = UDP + ADP. It participates in pyrimidine metabolism; CTP biosynthesis via de novo pathway; UDP from UMP (UMPK route): step 1/1. With respect to regulation, allosterically activated by GTP. Inhibited by UTP. Its function is as follows. Catalyzes the reversible phosphorylation of UMP to UDP. This is Uridylate kinase from Photorhabdus laumondii subsp. laumondii (strain DSM 15139 / CIP 105565 / TT01) (Photorhabdus luminescens subsp. laumondii).